The chain runs to 306 residues: Agmatinase (306 aa).

Residues His-126, Asp-149, His-151, Asp-153, Asp-230, and Asp-232 each contribute to the Mn(2+) site.

The protein belongs to the arginase family. Agmatinase subfamily. The cofactor is Mn(2+).

It carries out the reaction agmatine + H2O = urea + putrescine. It participates in amine and polyamine biosynthesis; putrescine biosynthesis via agmatine pathway; putrescine from agmatine: step 1/1. Catalyzes the formation of putrescine from agmatine. The sequence is that of Agmatinase from Shigella boydii serotype 18 (strain CDC 3083-94 / BS512).